The chain runs to 330 residues: Ketol-acid reductoisomerase (NADP(+)) (330 aa).

The KARI N-terminal Rossmann domain maps to 1–182 (MAVVYYDQDA…GATRAGVIET (182 aa)). Residues 25-28 (YGSQ), R48, S51, S53, and 83-86 (DETQ) contribute to the NADP(+) site. Residue H108 is part of the active site. An NADP(+)-binding site is contributed by G134. Residues 183-328 (TFKEETETDL…DQLREMMSWL (146 aa)) enclose the KARI C-terminal knotted domain. Mg(2+) contacts are provided by D191, E195, E227, and E231. A substrate-binding site is contributed by S252.

Belongs to the ketol-acid reductoisomerase family. It depends on Mg(2+) as a cofactor.

The catalysed reaction is (2R)-2,3-dihydroxy-3-methylbutanoate + NADP(+) = (2S)-2-acetolactate + NADPH + H(+). It carries out the reaction (2R,3R)-2,3-dihydroxy-3-methylpentanoate + NADP(+) = (S)-2-ethyl-2-hydroxy-3-oxobutanoate + NADPH + H(+). It functions in the pathway amino-acid biosynthesis; L-isoleucine biosynthesis; L-isoleucine from 2-oxobutanoate: step 2/4. Its pathway is amino-acid biosynthesis; L-valine biosynthesis; L-valine from pyruvate: step 2/4. In terms of biological role, involved in the biosynthesis of branched-chain amino acids (BCAA). Catalyzes an alkyl-migration followed by a ketol-acid reduction of (S)-2-acetolactate (S2AL) to yield (R)-2,3-dihydroxy-isovalerate. In the isomerase reaction, S2AL is rearranged via a Mg-dependent methyl migration to produce 3-hydroxy-3-methyl-2-ketobutyrate (HMKB). In the reductase reaction, this 2-ketoacid undergoes a metal-dependent reduction by NADPH to yield (R)-2,3-dihydroxy-isovalerate. The chain is Ketol-acid reductoisomerase (NADP(+)) from Moorella thermoacetica (strain ATCC 39073 / JCM 9320).